Reading from the N-terminus, the 426-residue chain is Histidine--tRNA ligase (426 aa).

The protein belongs to the class-II aminoacyl-tRNA synthetase family. In terms of assembly, homodimer.

It localises to the cytoplasm. It carries out the reaction tRNA(His) + L-histidine + ATP = L-histidyl-tRNA(His) + AMP + diphosphate + H(+). This is Histidine--tRNA ligase from Streptococcus thermophilus (strain ATCC BAA-491 / LMD-9).